Here is a 309-residue protein sequence, read N- to C-terminus: Probable manganese-dependent inorganic pyrophosphatase (309 aa).

Mn(2+) contacts are provided by H9, D13, D15, D75, H97, and D149.

Belongs to the PPase class C family. Requires Mn(2+) as cofactor.

Its subcellular location is the cytoplasm. It carries out the reaction diphosphate + H2O = 2 phosphate + H(+). The protein is Probable manganese-dependent inorganic pyrophosphatase of Staphylococcus epidermidis (strain ATCC 12228 / FDA PCI 1200).